We begin with the raw amino-acid sequence, 312 residues long: Glyoxylate/hydroxypyruvate reductase A (312 aa).

The active site involves R227. H275 acts as the Proton donor in catalysis.

The protein belongs to the D-isomer specific 2-hydroxyacid dehydrogenase family. GhrA subfamily.

The protein resides in the cytoplasm. It catalyses the reaction glycolate + NADP(+) = glyoxylate + NADPH + H(+). It carries out the reaction (R)-glycerate + NAD(+) = 3-hydroxypyruvate + NADH + H(+). The enzyme catalyses (R)-glycerate + NADP(+) = 3-hydroxypyruvate + NADPH + H(+). Functionally, catalyzes the NADPH-dependent reduction of glyoxylate and hydroxypyruvate into glycolate and glycerate, respectively. The polypeptide is Glyoxylate/hydroxypyruvate reductase A (Escherichia coli O7:K1 (strain IAI39 / ExPEC)).